The sequence spans 271 residues: Octanoyltransferase LipM (271 aa).

In terms of domain architecture, BPL/LPL catalytic spans Gly-31–Phe-242. Cys-144 functions as the Acyl-thioester intermediate in the catalytic mechanism.

It belongs to the octanoyltransferase LipM family. In terms of assembly, monomer.

It carries out the reaction octanoyl-[ACP] + L-lysyl-[protein] = N(6)-octanoyl-L-lysyl-[protein] + holo-[ACP] + H(+). Its pathway is protein modification; protein lipoylation via endogenous pathway; protein N(6)-(lipoyl)lysine from octanoyl-[acyl-carrier-protein]. In terms of biological role, catalyzes the transfer of endogenously produced octanoic acid from octanoyl-acyl-carrier-protein onto the lipoyl domain of GcvH, an intermediate carrier during protein lipoylation. In Clostridioides difficile (strain 630) (Peptoclostridium difficile), this protein is Octanoyltransferase LipM.